The primary structure comprises 695 residues: Testis-specific Y-encoded-like protein 2 (695 aa).

Positions 1-56 are disordered; that stretch reads MDRPDEGPPAKTRRLSSSESPQRDPPPPPPPPPLLRLPLPPPQQRPRLQEETEAAQ. Lysine 11 participates in a covalent cross-link: Glycyl lysine isopeptide (Lys-Gly) (interchain with G-Cter in SUMO2). Phosphoserine is present on residues serine 18 and serine 20. Over residues 23-44 the composition is skewed to pro residues; sequence RDPPPPPPPPPLLRLPLPPPQQ. Glycyl lysine isopeptide (Lys-Gly) (interchain with G-Cter in SUMO2) cross-links involve residues lysine 163 and lysine 165. Positions 175-207 are disordered; sequence EDEDEQESMRSSRRRRRRRRRKQRKVKRESRQR. The span at 185 to 202 shows a compositional bias: basic residues; that stretch reads SSRRRRRRRRRKQRKVKR. The residue at position 340 (threonine 340) is a Phosphothreonine. 2 disordered regions span residues 471–603 and 632–695; these read DINE…RDIE and VEEE…GKTG. The span at 481 to 491 shows a compositional bias: basic and acidic residues; it reads SPDHDEVRNET. Residues 496–518 show a composition bias toward acidic residues; the sequence is ESADDNETTDNNESADDNNENPE. The segment covering 519–535 has biased composition (basic and acidic residues); that stretch reads DNNKNADDNKENPDNNK. The span at 539–557 shows a compositional bias: low complexity; the sequence is GNNFFNGGFWGSHGNNQDS. Composition is skewed to acidic residues over residues 558-601 and 632-677; these read SDSD…DDRD and VEEE…DLED. 2 positions are modified to phosphoserine: serine 670 and serine 673.

This sequence belongs to the nucleosome assembly protein (NAP) family. As to quaternary structure, interacts with histones. Interacts with CASK. Part of a complex containing CASK, TBR1 and TSPYL2. Phosphorylation at Ser-20 and/or Thr-340 impairs function on cell proliferation. As to expression, ubiquitously expressed, with highest levels in testis, adrenal gland, cerebral cortex, ovary, skeletal muscle and spleen. Present in testis, adrenal gland, cerebral cortex and ovary (at protein level).

Its subcellular location is the nucleus. It localises to the cytoplasm. Functionally, part of the CASK/TBR1/TSPYL2 transcriptional complex which modulates gene expression in response to neuronal synaptic activity, probably by facilitating nucleosome assembly. May inhibit cell proliferation by inducing p53-dependent CDKN1A expression. This Macaca fascicularis (Crab-eating macaque) protein is Testis-specific Y-encoded-like protein 2 (TSPYL2).